The following is a 108-amino-acid chain: Large ribosomal subunit protein uL23 (108 aa).

It belongs to the universal ribosomal protein uL23 family. In terms of assembly, part of the 50S ribosomal subunit. Contacts protein L29, and trigger factor when it is bound to the ribosome.

One of the early assembly proteins it binds 23S rRNA. One of the proteins that surrounds the polypeptide exit tunnel on the outside of the ribosome. Forms the main docking site for trigger factor binding to the ribosome. The polypeptide is Large ribosomal subunit protein uL23 (Leptothrix cholodnii (strain ATCC 51168 / LMG 8142 / SP-6) (Leptothrix discophora (strain SP-6))).